Here is a 216-residue protein sequence, read N- to C-terminus: Somatotropin (216 aa).

An N-terminal signal peptide occupies residues 1 to 26; it reads MAADSQTPWLLTFSLLCLLWPQEAGA. Histidine 45 contacts Zn(2+). Cysteine 78 and cysteine 189 are oxidised to a cystine. Phosphoserine is present on serine 131. Position 198 (glutamate 198) interacts with Zn(2+). Cysteines 206 and 214 form a disulfide.

Belongs to the somatotropin/prolactin family.

The protein localises to the secreted. In terms of biological role, plays an important role in growth control. Its major role in stimulating body growth is to stimulate the liver and other tissues to secrete IGF1. It stimulates both the differentiation and proliferation of myoblasts. It also stimulates amino acid uptake and protein synthesis in muscle and other tissues. This chain is Somatotropin (Gh1), found in Rattus norvegicus (Rat).